The primary structure comprises 447 residues: uncharacterized protein (447 aa).

The tract at residues 392-435 (RFTKPSSSVAKSTSPSLRNSGSDESDLNQSDSDKEDERVVPVPK) is disordered. Residues 395–407 (KPSSSVAKSTSPS) are compositionally biased toward low complexity. Over residues 408-421 (LRNSGSDESDLNQS) the composition is skewed to polar residues.

This is an uncharacterized protein from Invertebrate iridescent virus 3 (IIV-3).